Reading from the N-terminus, the 71-residue chain is Putative membrane protein insertion efficiency factor (71 aa).

Belongs to the UPF0161 family.

It localises to the cell membrane. In terms of biological role, could be involved in insertion of integral membrane proteins into the membrane. The chain is Putative membrane protein insertion efficiency factor from Clostridium acetobutylicum (strain ATCC 824 / DSM 792 / JCM 1419 / IAM 19013 / LMG 5710 / NBRC 13948 / NRRL B-527 / VKM B-1787 / 2291 / W).